The following is a 91-amino-acid chain: Small ribosomal subunit protein uS19 (91 aa).

Positions 1 to 32 (MPRSIKKGPFIDEHLDRKVQSAQASNSRRPIK) are disordered. Over residues 9 to 19 (PFIDEHLDRKV) the composition is skewed to basic and acidic residues.

It belongs to the universal ribosomal protein uS19 family.

Its function is as follows. Protein S19 forms a complex with S13 that binds strongly to the 16S ribosomal RNA. The protein is Small ribosomal subunit protein uS19 of Acidithiobacillus ferrooxidans (strain ATCC 53993 / BNL-5-31) (Leptospirillum ferrooxidans (ATCC 53993)).